Reading from the N-terminus, the 489-residue chain is Anthranilate synthase component 1 1 (489 aa).

L-tryptophan is bound at residue 262–264 (PYS). The segment at 288 to 309 (DRIETEPIAGTRPRGETPDADD) is disordered. 297–298 (GT) serves as a coordination point for chorismate. Over residues 300–309 (PRGETPDADD) the composition is skewed to basic and acidic residues. Glutamate 324 lines the Mg(2+) pocket. Residues tyrosine 412, arginine 432, 446–448 (GAG), and glycine 448 each bind chorismate. Glutamate 461 is a Mg(2+) binding site.

This sequence belongs to the anthranilate synthase component I family. Tetramer of two components I and two components II. Mg(2+) is required as a cofactor.

It carries out the reaction chorismate + L-glutamine = anthranilate + pyruvate + L-glutamate + H(+). It participates in amino-acid biosynthesis; L-tryptophan biosynthesis; L-tryptophan from chorismate: step 1/5. This chain is Anthranilate synthase component 1 1 (trpE1), found in Haloarcula marismortui (strain ATCC 43049 / DSM 3752 / JCM 8966 / VKM B-1809) (Halobacterium marismortui).